The primary structure comprises 203 residues: Thymidylate kinase (203 aa).

G10 to S17 provides a ligand contact to ATP.

It belongs to the thymidylate kinase family.

It carries out the reaction dTMP + ATP = dTDP + ADP. Functionally, phosphorylation of dTMP to form dTDP in both de novo and salvage pathways of dTTP synthesis. This Cupriavidus necator (strain ATCC 17699 / DSM 428 / KCTC 22496 / NCIMB 10442 / H16 / Stanier 337) (Ralstonia eutropha) protein is Thymidylate kinase.